The sequence spans 563 residues: Putative solute carrier family 26 member 10P (563 aa).

Transmembrane regions (helical) follow at residues 45-65 (ALLASVPPVFGLYTSFFPVLI), 75-91 (LSTGTFAILSLMTGSAV), 116-136 (VGVAAAVAFGSGALMLGMFVL), 152-172 (ALTSGAALHVLLSQLPSLLGL), and 352-372 (LAGLFSCTVVLSVLLWLGPFF). In terms of domain architecture, STAS spans 406–541 (RVDFLLQVPG…VSVQDAAAYA (136 aa)).

This sequence belongs to the SLC26A/SulP transporter (TC 2.A.53) family.

The protein localises to the membrane. Chloride/bicarbonate exchanger. The sequence is that of Putative solute carrier family 26 member 10P (SLC26A10P) from Homo sapiens (Human).